An 89-amino-acid polypeptide reads, in one-letter code: Large ribosomal subunit protein uL29c (89 aa).

The protein belongs to the universal ribosomal protein uL29 family.

Its subcellular location is the plastid. It localises to the chloroplast. The polypeptide is Large ribosomal subunit protein uL29c (rpl29) (Trieres chinensis (Marine centric diatom)).